We begin with the raw amino-acid sequence, 278 residues long: Sulfate transport system permease protein CysT (278 aa).

The next 7 membrane-spanning stretches (helical) occupy residues 22 to 42, 67 to 87, 102 to 122, 139 to 159, 188 to 208, 217 to 237, and 246 to 266; these read FTWVYLTLILFIPIIALFLKS, FGLSLAAAALNGVFGVIIAWV, FIDLPFALPTAVAGLTLATVY, IAFTRWGVLLAMVFISLPFVV, FWRVILPPILPGVLAGVAQGF, SVVIISGNLPFDDLIAPVLIF, and AGATVIGSVLLLFSLVILFVI. One can recognise an ABC transmembrane type-1 domain in the interval 63-266; that stretch reads YEVTFGLSLA…LFSLVILFVI (204 aa).

Belongs to the binding-protein-dependent transport system permease family. CysTW subfamily. In terms of assembly, the complex is composed of two ATP-binding proteins (CysA), two transmembrane proteins (CysT and CysW) and a solute-binding protein (CysP).

It is found in the cell inner membrane. Functionally, part of the ABC transporter complex CysAWTP (TC 3.A.1.6.1) involved in sulfate/thiosulfate import. Probably responsible for the translocation of the substrate across the membrane. The protein is Sulfate transport system permease protein CysT (cysT) of Synechococcus elongatus (strain ATCC 33912 / PCC 7942 / FACHB-805) (Anacystis nidulans R2).